Reading from the N-terminus, the 197-residue chain is Casparian strip membrane protein 5 (197 aa).

At 1-34 the chain is on the cytoplasmic side; sequence MSTTIDMPGSSKAAKAGKPVLVTTPSRPGGWKKG. Residues 35–55 traverse the membrane as a helical segment; that stretch reads VAIMDFILRLGAIAAALGAAA. Residues 56-84 lie on the Extracellular side of the membrane; that stretch reads TMGLSDQTLPFFTQFFQFEASYDSFTTFQ. A helical transmembrane segment spans residues 85 to 105; the sequence is FFVITMALVAGYLVLSLPLSI. Over 106–117 the chain is Cytoplasmic; it reads VAVVRPHAAGPR. A helical transmembrane segment spans residues 118–138; the sequence is LFLIILDTVFLTLATASGASA. The Extracellular segment spans residues 139–171; the sequence is ASIVYLAHNGNQDTNWIAICNQFGDFCAQTSGA. The chain crosses the membrane as a helical span at residues 172–192; the sequence is VVSSLVAVLVFVLLIVMSALV. At 193–197 the chain is on the cytoplasmic side; it reads LGKKH.

This sequence belongs to the Casparian strip membrane proteins (CASP) family. As to quaternary structure, homodimer and heterodimers.

The protein resides in the cell membrane. Functionally, regulates membrane-cell wall junctions and localized cell wall deposition. Required for establishment of the Casparian strip membrane domain (CSD) and the subsequent formation of Casparian strips, a cell wall modification of the root endodermis that determines an apoplastic barrier between the intraorganismal apoplasm and the extraorganismal apoplasm and prevents lateral diffusion. The chain is Casparian strip membrane protein 5 from Lotus japonicus (Lotus corniculatus var. japonicus).